Reading from the N-terminus, the 512-residue chain is Probable DNA ligase (512 aa).

Aspartate 217 contacts ATP. Lysine 219 functions as the N6-AMP-lysine intermediate in the catalytic mechanism. ATP is bound by residues arginine 224, arginine 239, glutamate 268, phenylalanine 306, arginine 377, and lysine 383.

Belongs to the ATP-dependent DNA ligase family. Requires Mg(2+) as cofactor.

It carries out the reaction ATP + (deoxyribonucleotide)n-3'-hydroxyl + 5'-phospho-(deoxyribonucleotide)m = (deoxyribonucleotide)n+m + AMP + diphosphate.. In terms of biological role, DNA ligase that seals nicks in double-stranded DNA during DNA replication, DNA recombination and DNA repair. In Beutenbergia cavernae (strain ATCC BAA-8 / DSM 12333 / CCUG 43141 / JCM 11478 / NBRC 16432 / NCIMB 13614 / HKI 0122), this protein is Probable DNA ligase.